Consider the following 148-residue polypeptide: Glutaredoxin-C10 (148 aa).

A disordered region spans residues threonine 16–glutamate 55. A compositionally biased stretch (pro residues) spans histidine 22–proline 34. The segment covering serine 35–serine 47 has biased composition (low complexity). One can recognise a Glutaredoxin domain in the interval glutamate 55–tryptophan 147. Cysteines 76 and 79 form a disulfide.

Belongs to the glutaredoxin family. CC-type subfamily.

The protein localises to the cytoplasm. Functionally, has a glutathione-disulfide oxidoreductase activity in the presence of NADPH and glutathione reductase. Reduces low molecular weight disulfides and proteins. This is Glutaredoxin-C10 (GRXC10) from Arabidopsis thaliana (Mouse-ear cress).